Here is a 238-residue protein sequence, read N- to C-terminus: MSDLQTQMKQAVAEAAVAQIRDGMVVGLGSGSTAALMIEGLGARLAAGQLRDIVGVTTSFQGEVLAAELGIPLRALNATDRIDLAIDGADEVDPSFQLIKGGGACHVQEKLVADRAERFIVVVDSTKLVRCLNLDFLLPVEVLPGAWVQVQSRLKSMGGVAELRMATRKAGPVVTDQGNLVLDVRFENGISDPIALERDINNLPGVLENGLFVNLADEVLVGEIKDGVAGVRSLDRVG.

Substrate contacts are provided by residues 30–33 (SGST), 87–90 (DGAD), and 100–103 (KGGG). The active-site Proton acceptor is E109. K127 is a substrate binding site.

The protein belongs to the ribose 5-phosphate isomerase family. Homodimer.

The enzyme catalyses aldehydo-D-ribose 5-phosphate = D-ribulose 5-phosphate. Its pathway is carbohydrate degradation; pentose phosphate pathway; D-ribose 5-phosphate from D-ribulose 5-phosphate (non-oxidative stage): step 1/1. In terms of biological role, catalyzes the reversible conversion of ribose-5-phosphate to ribulose 5-phosphate. The protein is Ribose-5-phosphate isomerase A of Synechococcus sp. (strain CC9311).